The sequence spans 252 residues: Type III pantothenate kinase (252 aa).

An ATP-binding site is contributed by 6 to 13 (DIGNTSTA). Position 104–107 (104–107 (GADR)) interacts with substrate. The Proton acceptor role is filled by Asp106. A K(+)-binding site is contributed by Asp128. Position 131 (Thr131) interacts with ATP. Thr183 lines the substrate pocket.

It belongs to the type III pantothenate kinase family. Homodimer. NH4(+) is required as a cofactor. The cofactor is K(+).

It is found in the cytoplasm. The catalysed reaction is (R)-pantothenate + ATP = (R)-4'-phosphopantothenate + ADP + H(+). It participates in cofactor biosynthesis; coenzyme A biosynthesis; CoA from (R)-pantothenate: step 1/5. Catalyzes the phosphorylation of pantothenate (Pan), the first step in CoA biosynthesis. In Thermus thermophilus (strain ATCC 27634 / DSM 579 / HB8), this protein is Type III pantothenate kinase.